Reading from the N-terminus, the 1071-residue chain is ATP-dependent helicase/deoxyribonuclease subunit B (1071 aa).

It belongs to the helicase family. AddB/RexB type 2 subfamily. As to quaternary structure, heterodimer of AddA and RexB. Requires Mg(2+) as cofactor.

In terms of biological role, the heterodimer acts as both an ATP-dependent DNA helicase and an ATP-dependent, dual-direction single-stranded exonuclease. Recognizes the chi site generating a DNA molecule suitable for the initiation of homologous recombination. This subunit has 5' -&gt; 3' nuclease activity but not helicase activity. This Streptococcus pyogenes serotype M3 (strain ATCC BAA-595 / MGAS315) protein is ATP-dependent helicase/deoxyribonuclease subunit B.